Here is an 802-residue protein sequence, read N- to C-terminus: Receptor-type tyrosine-protein phosphatase alpha (802 aa).

An N-terminal signal peptide occupies residues 1-19; sequence MDSWFILVLLGSGLICVSA. At 20–151 the chain is on the extracellular side; the sequence is NNATTVAPSV…DSKDRRDETP (132 aa). Asparagine 21 and asparagine 36 each carry an N-linked (GlcNAc...) asparagine glycan. A disordered region spans residues 39 to 59; it reads TAEPVKEEAKTSNPTSSLTSL. Asparagine 68, asparagine 80, asparagine 86, asparagine 104, and asparagine 124 each carry an N-linked (GlcNAc...) asparagine glycan. 2 stretches are compositionally biased toward polar residues: residues 79-115 and 123-141; these read VNSS…QFTD and GNSS…SGNS. A disordered region spans residues 79–146; that stretch reads VNSSDSDNGT…PSGNSDSKDR (68 aa). The helical transmembrane segment at 152-174 threads the bilayer; that stretch reads IIAVMVALSSLLVIVFIIIVLYM. Over 175–802 the chain is Cytoplasmic; that stretch reads LRFKKYKQAG…DAFSDYANFK (628 aa). Phosphoserine occurs at positions 211 and 213. Tyrosine-protein phosphatase domains are found at residues 241-501 and 533-791; these read FREE…LLEH and LEEE…VQEY. Residues aspartate 410, 442-448, and glutamine 486 contribute to the substrate site; that span reads CSAGVGR. The Phosphocysteine intermediate role is filled by cysteine 442. Cysteine 732 (phosphocysteine intermediate) is an active-site residue. Tyrosine 798 is modified (phosphotyrosine).

The protein belongs to the protein-tyrosine phosphatase family. Receptor class 4 subfamily. In terms of assembly, part of a complex comprised of PTPRA, BCAR1, BCAR3 (via SH2 domain), and SRC. Within the complex, interacts (when phosphorylated on Tyr-798) with BCAR3 (via SH2 domain). Interacts with GRB2. In terms of processing, integrin binding to extracellular matrix induces phosphorylation at Tyr-798 which induces PTPRA localization and recruitment of BCAR3, BCAR1 and CRK to focal adhesions.

Its subcellular location is the cell membrane. It is found in the cell junction. The protein resides in the focal adhesion. The enzyme catalyses O-phospho-L-tyrosyl-[protein] + H2O = L-tyrosyl-[protein] + phosphate. In terms of biological role, tyrosine protein phosphatase which is involved in integrin-mediated focal adhesion formation. Following integrin engagement, specifically recruits BCAR3, BCAR1 and CRK to focal adhesions thereby promoting SRC-mediated phosphorylation of BRAC1 and the subsequent activation of PAK and small GTPase RAC1 and CDC42. In Homo sapiens (Human), this protein is Receptor-type tyrosine-protein phosphatase alpha (PTPRA).